The primary structure comprises 234 residues: MAAEKCAEEFGDSSAASLKIVPKDYAYPLLEDPQGALTTPTEGGRTLVTRGGFNYFHYGCDGHQDAGWGCGYRTLQSAISWIQRRQGSSGHVPSIREIQQILVAIGDKGPEFVGSRDWIGTLEEFYVIDVLHQVPCKILHAKELSSDEILGELRSYFEKYQGFVAMGGLSDTASKAITGYHCSARGRIFLQVVDPHFVGVPSSRQHLIDLGYVRWVPVDEFAGSTYNLCLILQP.

Active-site residues include cysteine 70, aspartate 194, and histidine 196.

The protein belongs to the peptidase C78 family.

Functionally, thiol protease which recognizes and hydrolyzes the peptide bond at the C-terminal Gly of UFM1, a ubiquitin-like modifier protein bound to a number of target proteins. This chain is Probable Ufm1-specific protease 1, found in Drosophila melanogaster (Fruit fly).